We begin with the raw amino-acid sequence, 465 residues long: GTPase Der (465 aa).

EngA-type G domains lie at 3-167 and 179-352; these read PLVA…PERS and IHIA…VSAL. GTP contacts are provided by residues 9–16, 57–61, 119–122, 185–192, 232–236, and 297–300; these read GRPNVGKS, DTGGM, NKID, DTAGL, and NKWD. Residues 353-437 form the KH-like domain; that stretch reads RQFSTSEVNK…PVRFLFREGD (85 aa).

It belongs to the TRAFAC class TrmE-Era-EngA-EngB-Septin-like GTPase superfamily. EngA (Der) GTPase family. As to quaternary structure, associates with the 50S ribosomal subunit.

Functionally, GTPase that plays an essential role in the late steps of ribosome biogenesis. This is GTPase Der from Xylella fastidiosa (strain M12).